A 757-amino-acid polypeptide reads, in one-letter code: UDP-N-acetylmuramoyl-L-alanyl-D-glutamate--2,6-diaminopimelate ligase MurE homolog, chloroplastic (757 aa).

A compositionally biased stretch (low complexity) spans 1–11 (MATAPLAFHLP). The N-terminal 53 residues, 1-53 (MATAPLAFHLPFPFPSASRPPPRLLPPSRRPPAARLAATRRFRPPTADDEPPE), are a transit peptide targeting the chloroplast. 3 disordered regions span residues 1 to 112 (MATA…DEFF), 126 to 152 (FTRRGLIKPSAPAPSQPEEEDGLADEL), and 172 to 195 (VSLADEEDEEANGGGGGVDYGDDG). Pro residues predominate over residues 12-30 (FPFPSASRPPPRLLPPSRR). Acidic residues-rich tracts occupy residues 47-56 (ADDEPPEAAE) and 142-152 (PEEEDGLADEL).

Belongs to the MurCDEF family. MurE subfamily. Component of the plastid-encoded plastid RNA polymerase (PEP) complex.

It localises to the plastid. It is found in the chloroplast. In terms of biological role, required for the activity of the plastid-encoded RNA polymerase (PEP) and full expression of genes transcribed by PEP. This is UDP-N-acetylmuramoyl-L-alanyl-D-glutamate--2,6-diaminopimelate ligase MurE homolog, chloroplastic from Oryza sativa subsp. japonica (Rice).